Here is a 295-residue protein sequence, read N- to C-terminus: Phosphatidylserine decarboxylase proenzyme (295 aa).

Catalysis depends on charge relay system; for autoendoproteolytic cleavage activity residues Asp-113, His-169, and Ser-256. Ser-256 functions as the Schiff-base intermediate with substrate; via pyruvic acid; for decarboxylase activity in the catalytic mechanism. At Ser-256 the chain carries Pyruvic acid (Ser); by autocatalysis.

Belongs to the phosphatidylserine decarboxylase family. PSD-B subfamily. Prokaryotic type II sub-subfamily. Heterodimer of a large membrane-associated beta subunit and a small pyruvoyl-containing alpha subunit. The cofactor is pyruvate. Post-translationally, is synthesized initially as an inactive proenzyme. Formation of the active enzyme involves a self-maturation process in which the active site pyruvoyl group is generated from an internal serine residue via an autocatalytic post-translational modification. Two non-identical subunits are generated from the proenzyme in this reaction, and the pyruvate is formed at the N-terminus of the alpha chain, which is derived from the carboxyl end of the proenzyme. The autoendoproteolytic cleavage occurs by a canonical serine protease mechanism, in which the side chain hydroxyl group of the serine supplies its oxygen atom to form the C-terminus of the beta chain, while the remainder of the serine residue undergoes an oxidative deamination to produce ammonia and the pyruvoyl prosthetic group on the alpha chain. During this reaction, the Ser that is part of the protease active site of the proenzyme becomes the pyruvoyl prosthetic group, which constitutes an essential element of the active site of the mature decarboxylase.

It is found in the cell membrane. The enzyme catalyses a 1,2-diacyl-sn-glycero-3-phospho-L-serine + H(+) = a 1,2-diacyl-sn-glycero-3-phosphoethanolamine + CO2. It functions in the pathway phospholipid metabolism; phosphatidylethanolamine biosynthesis; phosphatidylethanolamine from CDP-diacylglycerol: step 2/2. Catalyzes the formation of phosphatidylethanolamine (PtdEtn) from phosphatidylserine (PtdSer). The polypeptide is Phosphatidylserine decarboxylase proenzyme (Clostridium botulinum (strain 657 / Type Ba4)).